Reading from the N-terminus, the 425-residue chain is Adenylosuccinate synthetase (425 aa).

GTP is bound by residues 12–18 (GDEGKAK) and 40–42 (GHT). Aspartate 13 serves as the catalytic Proton acceptor. Aspartate 13 and glycine 40 together coordinate Mg(2+). Residues 13–16 (DEGK), 38–41 (NAGH), threonine 130, arginine 144, glutamine 224, threonine 239, and arginine 303 contribute to the IMP site. Histidine 41 acts as the Proton donor in catalysis. 299 to 305 (ATTGRPR) serves as a coordination point for substrate. Residues arginine 305, 331–333 (KID), and 411–413 (STG) contribute to the GTP site.

This sequence belongs to the adenylosuccinate synthetase family. As to quaternary structure, homodimer. The cofactor is Mg(2+).

The protein localises to the cytoplasm. The catalysed reaction is IMP + L-aspartate + GTP = N(6)-(1,2-dicarboxyethyl)-AMP + GDP + phosphate + 2 H(+). It participates in purine metabolism; AMP biosynthesis via de novo pathway; AMP from IMP: step 1/2. Functionally, plays an important role in the de novo pathway of purine nucleotide biosynthesis. Catalyzes the first committed step in the biosynthesis of AMP from IMP. This Leptospira interrogans serogroup Icterohaemorrhagiae serovar copenhageni (strain Fiocruz L1-130) protein is Adenylosuccinate synthetase.